We begin with the raw amino-acid sequence, 113 residues long: MEAKAVTRYVRISPLKVRLVMDVVRGMPVDRALATLRYMPQKAAREVARTLKSAIANAEHNFDMNRDELYIKTIYADQGPVLKRFMPRARGMANRIRKPTTHITVVVADKSDY.

This sequence belongs to the universal ribosomal protein uL22 family. Part of the 50S ribosomal subunit.

Functionally, this protein binds specifically to 23S rRNA; its binding is stimulated by other ribosomal proteins, e.g. L4, L17, and L20. It is important during the early stages of 50S assembly. It makes multiple contacts with different domains of the 23S rRNA in the assembled 50S subunit and ribosome. Its function is as follows. The globular domain of the protein is located near the polypeptide exit tunnel on the outside of the subunit, while an extended beta-hairpin is found that lines the wall of the exit tunnel in the center of the 70S ribosome. In Chloroflexus aggregans (strain MD-66 / DSM 9485), this protein is Large ribosomal subunit protein uL22.